We begin with the raw amino-acid sequence, 548 residues long: Probable malate:quinone oxidoreductase (548 aa).

Positions 521–548 (DKPQAADSTPKPQLKPQPVQKEVADIAL) are disordered. The segment covering 530–541 (PKPQLKPQPVQK) has biased composition (low complexity).

The protein belongs to the MQO family. FAD is required as a cofactor.

It carries out the reaction (S)-malate + a quinone = a quinol + oxaloacetate. It functions in the pathway carbohydrate metabolism; tricarboxylic acid cycle; oxaloacetate from (S)-malate (quinone route): step 1/1. The chain is Probable malate:quinone oxidoreductase from Shigella sonnei (strain Ss046).